Consider the following 1470-residue polypeptide: MSPHDDAINGTGDMTDRRPLLAAQEGIWTGQQLDPDSPAYNTAEYVHIDGPVDSAVFDTALHHVVAETKALNVAFVVDEQGQPWETDAPAGDWHLHTADLTAEPDPHAAALAWMDRDMARPVDLARRPVFGHALLRIAPEQYLWYHRVHHIALDGFGLSLVARRVAEVYTALTVGEPVADSGFGTLASVRDEERVYRESARFAKDRDYWADRFADRPPVATPAGRTALPARTFHRRVVDLGAVQTETLRAVARDLEVTWSEVLLAVTAARLHHATGASEIVLSLPVMGRLGSVSLRVPCMVRNILPLRVTVTASDSLRELAARISRELRSGLPHQRYRYEQLRRDLRLVGGQRRLSGPGVNIMPFEYDLRFAGHPSTVHNVSAGPVDDLSVNVYDRAEGAGLRIAVDANPDLYDEADVTALQEGLLSLLGQAVAAPDRALGELRTREAVPVLDGGPLPGPVRPVLGLIADHAAQRGGSVAVEHDGRSITYAQLFGSARDLARRLAARQVGRGDVVAVAVPRGIDAITAILGVLLSGAAYCPLDPTAPRARKAELLDDARPALVLTASAHAADFGDRAVVRLDQPEPESQEAARPTAPAPTAPAPEDLAYVIHTSGSTGRPKGVEIGHRALAHFVAGATHRYGLHHGDRVVQFAALHFDTSVEEVFLTLCAGATLVVRTDDMTDSVPGFLDACARLRISFLDLPTAYWHELAYAISTGAAALPAEVRTVVIGGEAALPERVDRWRKAVGTSVRLLNTYGPTEATVVATVADLHDPSLAPGDVPIGLPLPGTRAAVVDGELHLLGDNLAVGYRGDRPPDAARFAPLDAVHEAPRAYRTGDLVRIGDDGQLRYLGRSDTEFKISGHRVHPAEVESALLAHPGVRDAAVVGQLLHDGTRRLVAHVVPDGPAPAVALIRDHLRAALPAAMVPSAVEFLDRLPRTSAGKIDRNALAAMAPDVHVPDPDAQVPDPGAETAAHDSTLERTIAAVWQQVLAVAAVSARDDVFDLGAQSLQVIQVANRLSVELRRDVKVAWLFQHPTPAELARFLKQQEQQAHAQVQPRPAGPGLPPTLLADAVLDPDIRPGGGHPRAAGTPDRVLLTGATGFVGVHLLAELLTSTDAEVVCTVRAPSPAAAAARIHQTLEIHQIHLSDVARKRITAVPADLARPRLGLDEALFAELTRTCGAIVHNGATVSIMREYATLRAANTESTRDLLRMAAVRSTPLHFVSTLSVAPPIGLAPEVPEAFLPPHTGLRYGYQQSKWAAERLLEQAAERGLPVTVHRLGRIVGPHATGYVNERDFLWSVLRAGVPAGIVPDLFEEETWTPVDHIAQALVHLSLGQRPPTATVFNHATTPVRLSDVYDWLEEYGYPLRRMPLAQWRAELRGSSGAFGAVATTLAFFDSWDADTDEATGPELRLGRVRADNVVTGLHGSGITCPSVDRDLVFRYLDHCVTTGTLPAPAGKQGHPAMPAK.

The interval 584–603 (PEPESQEAARPTAPAPTAPA) is disordered. The 76-residue stretch at 974–1049 (AHDSTLERTI…ELARFLKQQE (76 aa)) folds into the Carrier domain. Ser-1009 is subject to O-(pantetheine 4'-phosphoryl)serine. The span at 1049-1059 (EQQAHAQVQPR) shows a compositional bias: low complexity. The interval 1049 to 1070 (EQQAHAQVQPRPAGPGLPPTLL) is disordered.

The protein belongs to the ATP-dependent AMP-binding enzyme family. The cofactor is pantetheine 4'-phosphate.

It catalyses the reaction 2 a (3R)-3-isocyanyl-fatty acyl-[ACP] + L-lysine + ATP + 2 NADPH = an isonitrile lipopeptide + 2 holo-[ACP] + AMP + diphosphate + 2 NADP(+). The catalysed reaction is 2 (3R)-3-isocyanylbutanoyl-[ACP] + L-lysine + ATP + 2 NADPH = (2S)-2,6-bis[(3R)-3-isocyanobutanamido]hexan-1-ol + 2 holo-[ACP] + AMP + diphosphate + 2 NADP(+). Nonribosomal peptide synthetase (NRPS) involved in the biosynthesis of a unique class of isonitrile lipopeptides (INLPs). Catalyzes the final step in the pathway, i.e. the condensation of a (3R)-3-isocyanyl-fatty acyl-[ACP] to both amino groups of a lysine, producing isonitrile lipopeptides. Can use (3R)-3-isocyanylbutanoyl-[ACP] as substrate, leading to (2S)-2,6-bis[(3R)-3-isocyanobutanamido]hexan-1-ol. This chain is Isonitrile lipopeptide synthase, found in Streptomyces coeruleorubidus.